The following is a 738-amino-acid chain: Polyribonucleotide nucleotidyltransferase (738 aa).

2 residues coordinate Mg(2+): D487 and D493. A KH domain is found at 554–613 (PKIVTMTINPDKIRDVIGPGGKMINSIIDQTGVKIDIEQDGTVFIASTDQEGIDLAMSMI). An S1 motif domain is found at 623–691 (GEVYDATVRR…DKGRVNASRK (69 aa)). A disordered region spans residues 704–738 (EAYEAKRKAARESRPPRDSRPPRRDGDRRPPRSTN).

Belongs to the polyribonucleotide nucleotidyltransferase family. Mg(2+) serves as cofactor.

The protein localises to the cytoplasm. The enzyme catalyses RNA(n+1) + phosphate = RNA(n) + a ribonucleoside 5'-diphosphate. Involved in mRNA degradation. Catalyzes the phosphorolysis of single-stranded polyribonucleotides processively in the 3'- to 5'-direction. The protein is Polyribonucleotide nucleotidyltransferase of Exiguobacterium sp. (strain ATCC BAA-1283 / AT1b).